The primary structure comprises 179 residues: ATP synthase subunit delta (179 aa).

It belongs to the ATPase delta chain family. In terms of assembly, F-type ATPases have 2 components, F(1) - the catalytic core - and F(0) - the membrane proton channel. F(1) has five subunits: alpha(3), beta(3), gamma(1), delta(1), epsilon(1). F(0) has three main subunits: a(1), b(2) and c(10-14). The alpha and beta chains form an alternating ring which encloses part of the gamma chain. F(1) is attached to F(0) by a central stalk formed by the gamma and epsilon chains, while a peripheral stalk is formed by the delta and b chains.

It is found in the cell inner membrane. Functionally, f(1)F(0) ATP synthase produces ATP from ADP in the presence of a proton or sodium gradient. F-type ATPases consist of two structural domains, F(1) containing the extramembraneous catalytic core and F(0) containing the membrane proton channel, linked together by a central stalk and a peripheral stalk. During catalysis, ATP synthesis in the catalytic domain of F(1) is coupled via a rotary mechanism of the central stalk subunits to proton translocation. Its function is as follows. This protein is part of the stalk that links CF(0) to CF(1). It either transmits conformational changes from CF(0) to CF(1) or is implicated in proton conduction. This is ATP synthase subunit delta from Acidithiobacillus ferridurans.